An 89-amino-acid polypeptide reads, in one-letter code: Strongylocin 2 (89 aa).

A signal peptide spans 1-22 (MNIRTASFTFIVVMMILSQTMA). A propeptide spanning residues 23–38 (DRFFNEPEEDDHLVES) is cleaved from the precursor. Trp-39 bears the 6'-bromotryptophan mark.

In terms of processing, contains 3 disulfide bonds.

In terms of biological role, has antimicrobial activity against Gram-negative bacteria and Gram-positive bacteria with minimum inhibitory concentration (MIC) between 0.78 uM and 3.13 uM. The sequence is that of Strongylocin 2 from Echinus esculentus (Sea urchin).